The sequence spans 443 residues: MSMFEDVTRALARQLNPRGDLTPLDSLIDFKRFHPFCLVLRKRKSTLFWGARYVRTDYTLLDVLEPGSSPSDPTLLGNFSFKNMLDVRVEGDVEVPTMMKVKGTVGLSQSSTLEVQMLSVAPTALENLHMERKLSADHPFLKEMREYKQNLYVVMEVVKAKQEVTLKRASNAISKFSLNLPSLGLQGSVNHKEAVTIPKGCVLAYRVRQLIIYGKDEWGIPYICTDNMPTFNPLCVLQRQGSTVQMISGEMHEDFKTLKKEVQQETQEVEKLSPVGRSSLLTSLSHLLGKKKELQDLEQMLEGALDKGHEVTLEALPKDVLLLKDAMDAILYFLGALTELSEEQLKILVKSLENKVLPVQLKLVESILEQNFLQDKEDVFPLRPDLLSSLGEEDQILTEALVGLSGLEVQRSGPQYTWNPDTCHNLCALYAGLSLLHLLSRDS.

The triggers pyroptosis stretch occupies residues 1–249 (MSMFEDVTRA…QGSTVQMISG (249 aa)). 9 to 13 (RALAR) serves as a coordination point for a cardiolipin. Transmembrane regions (beta stranded) follow at residues 78-95 (NFSFKNMLDVRVEGDVEV), 99-120 (MKVKGTVGLSQSSTLEVQMLSV), 164-179 (VTLKRASNAISKFSLN), and 183-197 (LGLQGSVNHKEAVTI). Residues 249–312 (GEMHEDFKTL…GALDKGHEVT (64 aa)) are a coiled coil.

This sequence belongs to the gasdermin family. In terms of assembly, homooligomer; homooligomeric ring-shaped pore complex containing 18-36 subunits when inserted in the membrane. Cleavage relieves autoinhibition by releasing the N-terminal moiety (Gasdermin-A2, N-terminal) that initiates pyroptosis. In contrast to Gsdma, not cleaved by bacterial effector protein SpeB. Post-translationally, palmitoylated. Expressed in the gastrointestinal tract, specifically from the middle to the upper region of the gastric mucosa in the glandular stomach.

It localises to the cytoplasm. It is found in the perinuclear region. The protein resides in the cytosol. Its subcellular location is the cell membrane. The full-length protein before cleavage is inactive: intramolecular interactions between N- and C-terminal domains mediate autoinhibition in the absence of activation signal. The intrinsic pyroptosis-inducing activity is carried by the released N-terminal moiety (Gasdermin-A2, N-terminal). Functionally, this form constitutes the precursor of the pore-forming protein and acts as a sensor of infection: upon bacterial infection, specifically cleaved by some bacterial effector protein, releasing the N-terminal moiety (Gasdermin-A2, N-terminal) that binds to membranes and forms pores, triggering pyroptosis. Its function is as follows. Pore-forming protein that causes membrane permeabilization and pyroptosis. Released upon cleavage of Gasdermin-A2, and binds to membrane inner leaflet lipids. Homooligomerizes within the membrane and forms pores of 10-15 nanometers (nm) of inner diameter, triggering pyroptosis. Binds to membrane inner leaflet lipids, such as phosphatidylinositol (4,5)-bisphosphate. The protein is Gasdermin-A2 of Mus musculus (Mouse).